Consider the following 786-residue polypeptide: Neprilysin-3 (786 aa).

Over 1-52 the chain is Cytoplasmic; it reads MTRYKQTEFTEDDSSSIGGIQLNEATGHTGMQIRYHTARATWNWRSRNKTEK. Residues 53–73 traverse the membrane as a helical; Signal-anchor for type II membrane protein segment; that stretch reads WLLITTFVMAITIFTLLIVLF. At 74-786 the chain is on the extracellular side; sequence TDGGSSDATK…MNPTEKCEVW (713 aa). The Peptidase M13 domain occupies 102–786; the sequence is PCLNKHCIFA…MNPTEKCEVW (685 aa). Disulfide bonds link Cys-103/Cys-108, Cys-126/Cys-771, Cys-134/Cys-731, Cys-190/Cys-450, and Cys-659/Cys-783. N-linked (GlcNAc...) asparagine glycosylation is found at Asn-216, Asn-226, Asn-256, Asn-279, Asn-305, Asn-325, Asn-356, Asn-388, Asn-496, and Asn-569. His-622 is a binding site for Zn(2+). Glu-623 is an active-site residue. 2 residues coordinate Zn(2+): His-626 and Glu-682. Asp-686 serves as the catalytic Proton donor. An N-linked (GlcNAc...) asparagine glycan is attached at Asn-715.

Belongs to the peptidase M13 family. Zn(2+) serves as cofactor.

Its subcellular location is the cell membrane. The catalysed reaction is Preferential cleavage of polypeptides between hydrophobic residues, particularly with Phe or Tyr at P1'.. Functionally, metalloendoprotease which is required in the dorsal paired medial neurons for the proper formation of long-term (LTM) and middle-term memories (MTM). Also required in the mushroom body neurons where it functions redundantly with neprilysins Nep2 and Nep4 in normal LTM formation. The polypeptide is Neprilysin-3 (Drosophila melanogaster (Fruit fly)).